Consider the following 404-residue polypeptide: Cysteine desulfurase IscS (404 aa).

Residues 75-76 (AT), N155, Q183, and 203-205 (SAH) contribute to the pyridoxal 5'-phosphate site. An N6-(pyridoxal phosphate)lysine modification is found at K206. T243 contributes to the pyridoxal 5'-phosphate binding site. The active-site Cysteine persulfide intermediate is C328. C328 contacts [2Fe-2S] cluster.

This sequence belongs to the class-V pyridoxal-phosphate-dependent aminotransferase family. NifS/IscS subfamily. As to quaternary structure, homodimer. Forms a heterotetramer with IscU, interacts with other sulfur acceptors. It depends on pyridoxal 5'-phosphate as a cofactor.

The protein localises to the cytoplasm. It catalyses the reaction (sulfur carrier)-H + L-cysteine = (sulfur carrier)-SH + L-alanine. Its pathway is cofactor biosynthesis; iron-sulfur cluster biosynthesis. Functionally, master enzyme that delivers sulfur to a number of partners involved in Fe-S cluster assembly, tRNA modification or cofactor biosynthesis. Catalyzes the removal of elemental sulfur atoms from cysteine to produce alanine. Functions as a sulfur delivery protein for Fe-S cluster synthesis onto IscU, an Fe-S scaffold assembly protein, as well as other S acceptor proteins. The sequence is that of Cysteine desulfurase IscS from Tolumonas auensis (strain DSM 9187 / NBRC 110442 / TA 4).